Here is a 117-residue protein sequence, read N- to C-terminus: Ribonuclease P protein component (117 aa).

It belongs to the RnpA family. Consists of a catalytic RNA component (M1 or rnpB) and a protein subunit.

The catalysed reaction is Endonucleolytic cleavage of RNA, removing 5'-extranucleotides from tRNA precursor.. Functionally, RNaseP catalyzes the removal of the 5'-leader sequence from pre-tRNA to produce the mature 5'-terminus. It can also cleave other RNA substrates such as 4.5S RNA. The protein component plays an auxiliary but essential role in vivo by binding to the 5'-leader sequence and broadening the substrate specificity of the ribozyme. The polypeptide is Ribonuclease P protein component (Staphylococcus aureus (strain bovine RF122 / ET3-1)).